Reading from the N-terminus, the 552-residue chain is MTPADLADAIVAAIGRAVADGDLDVTVPTTVTVERPKTAGHGDYASPVALQLAKAARRKPREVAEVLAGRLATQSGIASVDIAGPGFLNFTLAGDALGEIARTVVRAGESYGHAAKPRGVRVNLEFVSANPTGPVTLASARWAAVGDALARILTAAGFSVGGEYYVNDAGVQIERFGASVLAAAAGREIPAEGYHGAYVAEIAAAVLAGRPDLLDLPEDAALAVTTEEGLALMLTEIRSTLEGFGVHFDRWASERALHTAGALTKAIDDLRAQGHVYDADGAVWLRTTDFGDDKDRPLVKSDGQPTYFCADAAYYRDKRGRGFDQLIYLLGADHHGYVARLKAISACFGDDPATNLDVIIGQLVTLSRGGAPVKMSKRAGTFLTLHDLVDAVGVDAARYSLVRSSLDSSLDLDLDLVTRQTSDNPVFYVQYAHARISSLLRNAEALGLPTASETADVALLTHPREVDLLRGLGEFPRVIEAAASLRGPHRVARYLEELAGVYHRFYDACRVLPQGDEEAGPLTGARLLLVAATRVVLANGLGLLGVSAPERM.

A 'HIGH' region motif is present at residues 129-139; it reads ANPTGPVTLAS.

This sequence belongs to the class-I aminoacyl-tRNA synthetase family. Monomer.

It is found in the cytoplasm. It carries out the reaction tRNA(Arg) + L-arginine + ATP = L-arginyl-tRNA(Arg) + AMP + diphosphate. This Frankia alni (strain DSM 45986 / CECT 9034 / ACN14a) protein is Arginine--tRNA ligase.